Here is a 64-residue protein sequence, read N- to C-terminus: Large ribosomal subunit protein bL35c (64 aa).

It belongs to the bacterial ribosomal protein bL35 family.

The protein resides in the plastid. Its subcellular location is the chloroplast. In Cyanidium caldarium (Red alga), this protein is Large ribosomal subunit protein bL35c.